Here is a 923-residue protein sequence, read N- to C-terminus: Ubiquitin carboxyl-terminal hydrolase 10 (923 aa).

The DUSP domain maps to 19 to 134; sequence FTPEEEKRIV…GGPPIERKLI (116 aa). The tract at residues 65 to 91 is disordered; that stretch reads NECSTGESSEAPRPGPIDNHDIIESDS. A USP domain is found at 304–895; it reads AGLSNLGNTC…AAYVLFYRRV (592 aa). Cysteine 313 serves as the catalytic Nucleophile. Histidine 853 functions as the Proton acceptor in the catalytic mechanism.

Belongs to the peptidase C19 family.

It carries out the reaction Thiol-dependent hydrolysis of ester, thioester, amide, peptide and isopeptide bonds formed by the C-terminal Gly of ubiquitin (a 76-residue protein attached to proteins as an intracellular targeting signal).. Its function is as follows. Recognizes and hydrolyzes the peptide bond at the C-terminal Gly of ubiquitin. Involved in the processing of poly-ubiquitin precursors as well as that of ubiquitinated proteins. In Arabidopsis thaliana (Mouse-ear cress), this protein is Ubiquitin carboxyl-terminal hydrolase 10 (UBP10).